The chain runs to 224 residues: Homeobox protein Hox-B6 (224 aa).

An Antp-type hexapeptide motif is present at residues 127–132 (VYPWMQ). Residues 146 to 205 (GRRGRQTYTRYQTLELEKEFHYNRYLTRRRRIEIAHALCLTERQIKIWFQNRRMKWKKES) constitute a DNA-binding region (homeobox). Serine 214 carries the phosphoserine modification.

It belongs to the Antp homeobox family.

The protein localises to the nucleus. Its function is as follows. Sequence-specific transcription factor which is part of a developmental regulatory system that provides cells with specific positional identities on the anterior-posterior axis. This is Homeobox protein Hox-B6 (Hoxb6) from Mus musculus (Mouse).